A 450-amino-acid chain; its full sequence is MTGPPGNPAFATIHEFFPGNTFYNFECLRILSTAPYGGCDPAEFLTAIAAIKPSDPETWATAWSHAASQAERIAEDALARGDTLAARDAFLRASSYTRASGYMRINGPTLDRHDPRALPVARKTQALFRKALPFLDCDARIVDIPYRPTQYSKPVSLPGYVYIPSPQNRLPDGKIPVLLNTGGADSVQEELYYIHPQAGHARGYAVITFEGPGQGIVLREKGLYMRPDWEVVTGQVLDWLEGYAATLQQEEGLTLDLSRIAVVGASMGGYYALRAASDPRIKACLSIDPFYDMWDFGTRHISGLFMAAWTGGWVSDATIDRVIGAGMYLNFQLRWEVGVTTAFWGIESPSRILREMKRYSLQGGFLARVQCPVFVSGAGKSLYFDTEEHTMRVFGDLKHLGERRRTLWMPSRPEEGGLQAKIGAFGLVNTKAFGFLDGVFGVKRVLEAET.

The Nucleophile role is filled by S266.

This sequence belongs to the AB hydrolase superfamily. FUS2 hydrolase family. Homodimer.

It functions in the pathway mycotoxin biosynthesis. In terms of biological role, hydrolase; part of the gene cluster that mediates the biosynthesis of the cytotoxic leucine-containing cytochalasans, including aspochalasin C, aspochalasin E, TMC-169, flavichalasine F, aspergillin PZ, aspochalasin M and flavichalasine G. The first step in the pathway is catalyzed by the hybrid PKS-NRPS ffsA that utilizes 8 units of malonyl-CoA to iteratively assemble the octaketide chain before addition of L-leucine by the C-terminal NRPS modules. Because ffsA lacks a designated enoylreductase (ER) domain, the required activity is provided the enoyl reductase fssC. The methyltransferase (MT) domain of ffsA catalyzes the alpha-methylation at C10 and C14 using S-adenosyl-L-methionine as the methyl-donating cosubstrate. Reduction by the hydrolyase ffsE, followed by dehydration and intra-molecular Diels-Alder cyclization by the Diels-Alderase ffsF then yield the required isoindolone-fused macrocycle. A number of oxidative steps catalyzed by the tailoring cytochrome P450 monooxygenase ffsD, the FAD-linked oxidoreductase ffsJ and the short-chain dehydrogenase/reductase ffsI, are further required to afford the final products. The protein is Hydrolase ffsE of Aspergillus flavipes.